We begin with the raw amino-acid sequence, 261 residues long: U1 small nuclear ribonucleoprotein 70 kDa homolog (261 aa).

Positions 100 to 178 (KTMFLSRLSY…RRIVVDVERG (79 aa)) constitute an RRM domain. The interval 192 to 261 (GLGGRHYTKE…DSSPKRRRYN (70 aa)) is disordered. Residues 198–215 (YTKERPRRERGSRFRGDS) are compositionally biased toward basic and acidic residues. Residues 216–235 (GFRGGYRGGFRKSSGGGSRF) are compositionally biased toward gly residues.

Component of the spliceosome, where it is associated with snRNP U1. Associates with U1 snRNA.

Its subcellular location is the nucleus. Its function is as follows. Involved in nuclear mRNA splicing. Essential for growth. The sequence is that of U1 small nuclear ribonucleoprotein 70 kDa homolog from Schizosaccharomyces pombe (strain 972 / ATCC 24843) (Fission yeast).